Reading from the N-terminus, the 404-residue chain is MSQSGSRLFTSESVTEGHPDKICDAISDSILDALLTDDPRARVAVETLVTTGQVHVAGEVTTSAYADIPKIVRDTVLEIGYDSSAKGFDGNSCGVNVAIGAQSPEIAQGVDHSHEVRTGELSDDEIDRQGAGDQGLMFGFATTDTPELMPLPIALAHRLSRRLTEVRKSGVLPYLRPDGKTQVTIEYDGDKAVRLDTVVISTQHAADIDLDNLLTPDLREKVLGSVLAEIDMPELDVSDIRLLVNPTGKFVLGGPMGDAGLTGRKIIVDTYGGMARHGGGAFSGKDPSKVDRSAAYAMRWVAKNAVAAGLADRIEVQVAYAIGKAAPVGLFVETFGTEKTDPARIQQAITETFDLRPGAIIRDLDLLRPIYAQTAAYGHFGRTDIDLPWESIDRAEKLRAAAGL.

His18 serves as a coordination point for ATP. Asp20 contributes to the Mg(2+) binding site. Residue Glu46 participates in K(+) binding. Residues Glu59 and Gln102 each coordinate L-methionine. Residues 102–112 form a flexible loop region; that stretch reads QSPEIAQGVDH. ATP-binding positions include 178-180, 249-250, Asp258, 264-265, Ala281, and Lys285; these read DGK, KF, and RK. Asp258 is a binding site for L-methionine. Lys289 serves as a coordination point for L-methionine.

Belongs to the AdoMet synthase family. In terms of assembly, homotetramer; dimer of dimers. Mg(2+) is required as a cofactor. Requires K(+) as cofactor.

Its subcellular location is the cytoplasm. The enzyme catalyses L-methionine + ATP + H2O = S-adenosyl-L-methionine + phosphate + diphosphate. It participates in amino-acid biosynthesis; S-adenosyl-L-methionine biosynthesis; S-adenosyl-L-methionine from L-methionine: step 1/1. Its function is as follows. Catalyzes the formation of S-adenosylmethionine (AdoMet) from methionine and ATP. The overall synthetic reaction is composed of two sequential steps, AdoMet formation and the subsequent tripolyphosphate hydrolysis which occurs prior to release of AdoMet from the enzyme. The sequence is that of S-adenosylmethionine synthase from Rhodococcus jostii (strain RHA1).